A 275-amino-acid chain; its full sequence is Ribosomal RNA small subunit methyltransferase A (275 aa).

S-adenosyl-L-methionine is bound by residues Asn-19, Leu-21, Gly-46, Glu-71, Asp-94, and Asn-117.

It belongs to the class I-like SAM-binding methyltransferase superfamily. rRNA adenine N(6)-methyltransferase family. RsmA subfamily.

Its subcellular location is the cytoplasm. The catalysed reaction is adenosine(1518)/adenosine(1519) in 16S rRNA + 4 S-adenosyl-L-methionine = N(6)-dimethyladenosine(1518)/N(6)-dimethyladenosine(1519) in 16S rRNA + 4 S-adenosyl-L-homocysteine + 4 H(+). In terms of biological role, specifically dimethylates two adjacent adenosines (A1518 and A1519) in the loop of a conserved hairpin near the 3'-end of 16S rRNA in the 30S particle. May play a critical role in biogenesis of 30S subunits. The protein is Ribosomal RNA small subunit methyltransferase A of Burkholderia mallei (strain NCTC 10247).